A 104-amino-acid chain; its full sequence is Salivary protein FS145 (104 aa).

The signal sequence occupies residues 1–18 (MKLFAVFLLFCLVNQIYC). Cystine bridges form between C32–C80, C62–C89, C72–C100, and C76–C102. Residues 92–94 (WGD) carry the Putative integrin attachment site; atypical (WGD) motif.

As to quaternary structure, interacts with host integrin alpha-V/beta-3 (ITGAV:ITGB3).

The protein localises to the secreted. Its function is as follows. Inhibits proliferation, adhesion and migration of host cells as well as host angiogenesis by blocking host integrin alpha-V/beta-3 (ITGAV:ITGB3). This chain is Salivary protein FS145, found in Xenopsylla cheopis (Oriental rat flea).